Consider the following 110-residue polypeptide: Large ribosomal subunit protein uL22 (110 aa).

This sequence belongs to the universal ribosomal protein uL22 family. As to quaternary structure, part of the 50S ribosomal subunit.

Functionally, this protein binds specifically to 23S rRNA; its binding is stimulated by other ribosomal proteins, e.g. L4, L17, and L20. It is important during the early stages of 50S assembly. It makes multiple contacts with different domains of the 23S rRNA in the assembled 50S subunit and ribosome. In terms of biological role, the globular domain of the protein is located near the polypeptide exit tunnel on the outside of the subunit, while an extended beta-hairpin is found that lines the wall of the exit tunnel in the center of the 70S ribosome. The chain is Large ribosomal subunit protein uL22 from Delftia acidovorans (strain DSM 14801 / SPH-1).